Reading from the N-terminus, the 308-residue chain is MMLILKLSLLSLLIATPGLLVSGANMITCYGDVQKLHCETGLIIVKSSLYGRTDSTTCSTNRPPAQVAVTTCSLPITTIGDRCNGLPDCELKTDLLGNTDPCQGTYKYYNTSFDCINGNYAVICEHGYSTLDCGNDAILIVNANYGRASSQICSNGLPNGLTQNTNCYAANTLTTVAGLCNGKKSCTVEALNTIFSDPCSGTVKYLTVTYICTKEMVVCEGGSASINCGAQTIKTIWANYGRTDSTVCSTGRPGSQLLNTNCYTSDTLNKVAAGCDHLSTCTIPANNNFFGDPCPNTYKYLRIVYACV.

The N-terminal stretch at Met1–Gly23 is a signal peptide. SUEL-type lectin domains are found at residues Ile27–Cys115, Ile123–Thr213, and Val218–Val308. The N-linked (GlcNAc...) asparagine glycan is linked to Asn110.

In terms of assembly, homotrimer. As to expression, expressed in eggs, but not in liver.

It is found in the secreted. Lectin that binds L-rhamnose. Also binds monosaccharides possessing steric similarity to the hydroxyl group orientation at C2 and C4 of the pyranose ring structure of L-rhamnose, such as L-mannose and L-lyxose. The protein is Rhamnose-binding lectin of Silurus asotus (Amur catfish).